Consider the following 258-residue polypeptide: Octanoyltransferase (258 aa).

The region spanning 42–226 (NLGADTLLLL…AVVAALDGAL (185 aa)) is the BPL/LPL catalytic domain. Residues 80–87 (RGGKITWH), 156–158 (AIG), and 169–171 (GFS) each bind substrate. Cysteine 187 serves as the catalytic Acyl-thioester intermediate.

This sequence belongs to the LipB family.

The protein resides in the cytoplasm. It catalyses the reaction octanoyl-[ACP] + L-lysyl-[protein] = N(6)-octanoyl-L-lysyl-[protein] + holo-[ACP] + H(+). Its pathway is protein modification; protein lipoylation via endogenous pathway; protein N(6)-(lipoyl)lysine from octanoyl-[acyl-carrier-protein]: step 1/2. In terms of biological role, catalyzes the transfer of endogenously produced octanoic acid from octanoyl-acyl-carrier-protein onto the lipoyl domains of lipoate-dependent enzymes. Lipoyl-ACP can also act as a substrate although octanoyl-ACP is likely to be the physiological substrate. This Rhodococcus opacus (strain B4) protein is Octanoyltransferase.